A 363-amino-acid chain; its full sequence is Strychnine O-methyltransferase (363 aa).

5 residues coordinate S-adenosyl-L-methionine: G204, D227, D249, M250, and K263. H267 (proton acceptor) is an active-site residue.

Belongs to the class I-like SAM-binding methyltransferase superfamily. Cation-independent O-methyltransferase family.

It carries out the reaction 10-hydroxystrychnine + S-adenosyl-L-methionine = beta-colubrine + S-adenosyl-L-homocysteine + H(+). It catalyses the reaction 11-demethylbrucine + S-adenosyl-L-methionine = brucine + S-adenosyl-L-homocysteine + H(+). It participates in alkaloid biosynthesis. O-methyltransferase involved in the biosynthesis of curare monoterpene indole alkaloids (MIAs), natural products such as strychnine, a neurotoxic compound used as a pesticide to control rodents, and its pharmacologically active derivatives, including brucine, used to regulate blood pressure. Curare alkaloids act as animal glycine receptor antagonists. Catalyzes the conversion of 10-OH strychnine to beta-colubrine, and of 11-deMe brucine to brucine. The sequence is that of Strychnine O-methyltransferase from Strychnos nux-vomica (Poison nut).